The following is a 189-amino-acid chain: Cancer/testis antigen family 45 member A5 (189 aa).

Basic and acidic residues predominate over residues 1-23; it reads MTDKTEKVAVDPETVFKRPRECD. Disordered regions lie at residues 1 to 27 and 82 to 118; these read MTDK…SPSY and DGMM…SPKS.

The protein belongs to the CT45 family. Testis specific. Expressed in cancer cell lines.

It localises to the nucleus. The polypeptide is Cancer/testis antigen family 45 member A5 (Homo sapiens (Human)).